Here is a 555-residue protein sequence, read N- to C-terminus: DNA ligase (555 aa).

ATP is bound at residue Glu-247. Residue Lys-249 is the N6-AMP-lysine intermediate of the active site. ATP-binding residues include Arg-254, Arg-269, Glu-298, Phe-337, Arg-411, and Lys-417.

It belongs to the ATP-dependent DNA ligase family. It depends on Mg(2+) as a cofactor.

It catalyses the reaction ATP + (deoxyribonucleotide)n-3'-hydroxyl + 5'-phospho-(deoxyribonucleotide)m = (deoxyribonucleotide)n+m + AMP + diphosphate.. In terms of biological role, DNA ligase that seals nicks in double-stranded DNA during DNA replication, DNA recombination and DNA repair. This is DNA ligase from Archaeoglobus fulgidus (strain ATCC 49558 / DSM 4304 / JCM 9628 / NBRC 100126 / VC-16).